Consider the following 402-residue polypeptide: Putative F-box protein At3g23960 (402 aa).

The tract at residues 1–23 (MRSRQLHNVSEDRETLSRRNKRS) is disordered. The region spanning 26 to 73 (SLNGHIPIDLLIEIFLKLPVKSIATCRSVSKFWTYVLGRQDFTELFLT) is the F-box domain.

This Arabidopsis thaliana (Mouse-ear cress) protein is Putative F-box protein At3g23960.